The chain runs to 390 residues: MAFDLAARLAERRAADLYRQRPLLESPQGPEVVVDGQRLLAFCSNDYLGLANHPEVIAAWQAGAERWGVGGGASHLVVGHSTPHHQVEEALAELTGRPRALLFSTGYMANLGAITALVGQGDTVLQDRLNHASLLDGGLLSGARFNRYLHNDPASLASRLDKAVGNTLVVTDGVFSMDGDLADLPALANVARARGAWLMVDDAHGLGTLGAKGGGIVEHFGLGVDDVPVLIGTLGKACGTAGAFVAGSEALIEALVQFARPYIYTTSQPPALACATLKSLELLRRETWRREHLAALIRQFREGAQQLGLQLMDSPTPIQPIVIGDSAQALRLSRLLRERGLLVTAIRPPTVPAGSARLRVTLSAAHSEAQVQLLLNALAECYPQLENADA.

Arginine 19 contributes to the substrate binding site. 106–107 (GY) is a pyridoxal 5'-phosphate binding site. Histidine 131 serves as a coordination point for substrate. Pyridoxal 5'-phosphate is bound by residues serine 176, histidine 204, and threonine 233. Lysine 236 is subject to N6-(pyridoxal phosphate)lysine. Threonine 350 is a substrate binding site.

The protein belongs to the class-II pyridoxal-phosphate-dependent aminotransferase family. BioF subfamily. As to quaternary structure, homodimer. Requires pyridoxal 5'-phosphate as cofactor.

It carries out the reaction 6-carboxyhexanoyl-[ACP] + L-alanine + H(+) = (8S)-8-amino-7-oxononanoate + holo-[ACP] + CO2. It participates in cofactor biosynthesis; biotin biosynthesis. Catalyzes the decarboxylative condensation of pimeloyl-[acyl-carrier protein] and L-alanine to produce 8-amino-7-oxononanoate (AON), [acyl-carrier protein], and carbon dioxide. The protein is 8-amino-7-oxononanoate synthase of Pseudomonas putida (strain ATCC 47054 / DSM 6125 / CFBP 8728 / NCIMB 11950 / KT2440).